Consider the following 859-residue polypeptide: Leucine--tRNA ligase (859 aa).

The 'HIGH' region signature appears at 43–53 (PYPSGRIHMGH). Residues 614 to 618 (KMSKS) carry the 'KMSKS' region motif. Lys-617 lines the ATP pocket.

Belongs to the class-I aminoacyl-tRNA synthetase family.

It is found in the cytoplasm. It catalyses the reaction tRNA(Leu) + L-leucine + ATP = L-leucyl-tRNA(Leu) + AMP + diphosphate. The sequence is that of Leucine--tRNA ligase from Magnetococcus marinus (strain ATCC BAA-1437 / JCM 17883 / MC-1).